The sequence spans 169 residues: Phosphopantetheine adenylyltransferase (169 aa).

Serine 10 serves as a coordination point for substrate. Residues 10–11 and histidine 18 each bind ATP; that span reads SF. Substrate-binding residues include lysine 42, leucine 74, and arginine 88. ATP-binding positions include 89–91, glutamate 99, and 124–130; these read GLR and YAFLSSS.

This sequence belongs to the bacterial CoaD family. As to quaternary structure, homohexamer. Requires Mg(2+) as cofactor.

The protein resides in the cytoplasm. It carries out the reaction (R)-4'-phosphopantetheine + ATP + H(+) = 3'-dephospho-CoA + diphosphate. It participates in cofactor biosynthesis; coenzyme A biosynthesis; CoA from (R)-pantothenate: step 4/5. Functionally, reversibly transfers an adenylyl group from ATP to 4'-phosphopantetheine, yielding dephospho-CoA (dPCoA) and pyrophosphate. The protein is Phosphopantetheine adenylyltransferase of Geobacillus sp. (strain WCH70).